Consider the following 576-residue polypeptide: MNIFNQLKQDIIAASQKLYNNKEIANTATIETPKDSFNGDLSSNIAMIIASKESIAPREVALKFKEVLVTLPYIASIEIAGPGFINFTIKAESWQAAIKDILQHEEKFFEIDIDKNSNINIEYVSANPTGPMHIGHARGAVYGDVLARILQKVGYSVTKEYYVNDAGSQINDLVSTVLLRYKEALGEPITIPVGLYPGEYLIPLGEILSKEYGNKLLTMNDVERFKIIKSFAVEKMLDLNRKDLADLGIKHDVFFSEQSLYDKGEIEKTVKLLERMGLIYEGTLPAPKGKVHEDWEYRVQKLFKSTNYGDSQDRPIEKADGSWSYFASDLAYAKDKIDRGANHLIYVLGADHSGYVKRIEAIVKALGQEKVKVDVKICQLVNFVENGVPIKMSKRLGSFASVQDVNKEVGKDIIRFMMLTRQNDKPLDFDLVKVKEQSRENPIFYVQYAHVRTKSILSKARELMPEAYNSFKEGKYNLSLLSSEEEIEIIKLLAAWTKTLEASVKYFEPHRIAFYLINLASKFHSMWNFGKENSDYRFIIENNKELTLARLALASVIQKIIASGLEVIGVEPMVTM.

Residues 126 to 136 (ANPTGPMHIGH) carry the 'HIGH' region motif.

This sequence belongs to the class-I aminoacyl-tRNA synthetase family. In terms of assembly, monomer.

The protein localises to the cytoplasm. The catalysed reaction is tRNA(Arg) + L-arginine + ATP = L-arginyl-tRNA(Arg) + AMP + diphosphate. The protein is Arginine--tRNA ligase (argS) of Rickettsia prowazekii (strain Madrid E).